The chain runs to 387 residues: Cysteine desulfurase (387 aa).

Residues 72–73 (GT), Asn-152, Gln-180, and 200–202 (SAH) each bind pyridoxal 5'-phosphate. Position 203 is an N6-(pyridoxal phosphate)lysine (Lys-203). Thr-238 provides a ligand contact to pyridoxal 5'-phosphate. Cys-323 functions as the Cysteine persulfide intermediate in the catalytic mechanism. Cys-323 contacts [2Fe-2S] cluster.

This sequence belongs to the class-V pyridoxal-phosphate-dependent aminotransferase family. NifS/IscS subfamily. Homodimer. Pyridoxal 5'-phosphate serves as cofactor.

The catalysed reaction is (sulfur carrier)-H + L-cysteine = (sulfur carrier)-SH + L-alanine. Its function is as follows. Catalyzes the removal of elemental sulfur atoms from cysteine to produce alanine. Seems to participate in the biosynthesis of the nitrogenase metalloclusters by providing the inorganic sulfur required for the Fe-S core formation. This chain is Cysteine desulfurase, found in Cereibacter sphaeroides (Rhodobacter sphaeroides).